We begin with the raw amino-acid sequence, 164 residues long: MSDVENQPFFNIQRVYLKDMSLEQPNSPAIFLEQDMPSVEVEVDVKADRLAESVFEVVVSGTVTAKVKDKVAFLIEAKQAGIFDIRNIPDEQLDPLVGIACPTILFPYLRSNIADAITRAGFPPIHLAEINFQALYEQRLAQLQQQAGAAAGAPNGAPNGTTLN.

Belongs to the SecB family. As to quaternary structure, homotetramer, a dimer of dimers. One homotetramer interacts with 1 SecA dimer.

It is found in the cytoplasm. Functionally, one of the proteins required for the normal export of preproteins out of the cell cytoplasm. It is a molecular chaperone that binds to a subset of precursor proteins, maintaining them in a translocation-competent state. It also specifically binds to its receptor SecA. This is Protein-export protein SecB from Burkholderia orbicola (strain MC0-3).